Reading from the N-terminus, the 262-residue chain is Demethyldecarbamoylnovobiocin O-methyltransferase (262 aa).

64-65 is a binding site for S-adenosyl-L-methionine; it reads TM. Glu72 (proton acceptor) is an active-site residue. S-adenosyl-L-methionine is bound by residues 92 to 96, 122 to 126, Phe178, 196 to 197, and Ser202; these read ETGVW, DSFQG, and DG. A Mg(2+)-binding site is contributed by Asp196. Mg(2+) contacts are provided by Asp223 and Asp224.

It belongs to the methyltransferase TylF/MycF family. As to quaternary structure, homodimer. The cofactor is Mg(2+).

The catalysed reaction is desmethyldescarbamoylnovobiocin + S-adenosyl-L-methionine = descarbamoylnovobiocin + S-adenosyl-L-homocysteine + H(+). It participates in antibiotic biosynthesis; novobiocin biosynthesis. S-adenosyl-L-methionine-dependent O-methyltransferase that methylates at 4-OH of the noviose moiety, the penultimate step in the novobiocin biosynthesis pathway. Novobiocin is an aminocoumarin family antibiotic that targets bacterial DNA gyrases. This is Demethyldecarbamoylnovobiocin O-methyltransferase (novP) from Streptomyces niveus (Streptomyces spheroides).